We begin with the raw amino-acid sequence, 436 residues long: Transcriptional regulator VdtR (436 aa).

The segment at residues 17 to 44 (CDRCSANKVKCTQEKPECERCRLLSLPC) is a DNA-binding region (zn(2)-C6 fungal-type). Disordered stretches follow at residues 51-147 (RIGK…HDKG) and 173-192 (TARE…EYSD). The span at 125 to 141 (SHNSNRPTNMASTNQDQ) shows a compositional bias: polar residues. The segment covering 174 to 192 (AREDQKQHPELRSEEEYSD) has biased composition (basic and acidic residues).

Its subcellular location is the nucleus. Transcription factor that regulates expression of the viriditoxin biosynthesis cluster and viriditoxin synthesis. This is Transcriptional regulator VdtR from Byssochlamys spectabilis (Paecilomyces variotii).